A 216-amino-acid chain; its full sequence is Probable transaldolase (216 aa).

Lysine 83 serves as the catalytic Schiff-base intermediate with substrate.

This sequence belongs to the transaldolase family. Type 3B subfamily.

It is found in the cytoplasm. It catalyses the reaction D-sedoheptulose 7-phosphate + D-glyceraldehyde 3-phosphate = D-erythrose 4-phosphate + beta-D-fructose 6-phosphate. The protein operates within carbohydrate degradation; pentose phosphate pathway; D-glyceraldehyde 3-phosphate and beta-D-fructose 6-phosphate from D-ribose 5-phosphate and D-xylulose 5-phosphate (non-oxidative stage): step 2/3. Its function is as follows. Transaldolase is important for the balance of metabolites in the pentose-phosphate pathway. In Caldanaerobacter subterraneus subsp. tengcongensis (strain DSM 15242 / JCM 11007 / NBRC 100824 / MB4) (Thermoanaerobacter tengcongensis), this protein is Probable transaldolase.